The following is a 203-amino-acid chain: Cytochrome c oxidase assembly protein CtaG (203 aa).

Residues 1-16 (MADQQEKDQKLKKQQR) are Cytoplasmic-facing. Residues 17 to 39 (SNATIAFACLSFFVCMIGAAYAS) form a helical; Signal-anchor for type II membrane protein membrane-spanning segment. Topologically, residues 40-203 (VPLYRIFCQV…VKAETPTNGS (164 aa)) are periplasmic.

Belongs to the COX11/CtaG family.

It is found in the cell inner membrane. Exerts its effect at some terminal stage of cytochrome c oxidase synthesis, probably by being involved in the insertion of the copper B into subunit I. This is Cytochrome c oxidase assembly protein CtaG from Brucella anthropi (strain ATCC 49188 / DSM 6882 / CCUG 24695 / JCM 21032 / LMG 3331 / NBRC 15819 / NCTC 12168 / Alc 37) (Ochrobactrum anthropi).